The chain runs to 516 residues: Delta(24)-sterol reductase (516 aa).

An N-terminal signal peptide occupies residues 1-22 (MEPAVSLAVCALLFLLWVRLKG). Residues 23-31 (LEFVLIHQR) are Lumenal-facing. The helical transmembrane segment at 32 to 52 (WVFVCLFLLPLSLIFDIYYYV) threads the bilayer. Residues 53 to 516 (RAWVVFKLSS…YDKICKAARH (464 aa)) lie on the Cytoplasmic side of the membrane. The region spanning 58 to 234 (FKLSSAPRLH…VAAEIRIIPA (177 aa)) is the FAD-binding PCMH-type domain. 163 to 175 (TVGGLIMGTGIES) lines the FAD pocket.

It belongs to the FAD-binding oxidoreductase/transferase type 4 family. Interacts with DHCR7; this interaction regulates DHCR7 activity. The cofactor is FAD. In terms of tissue distribution, highly expressed in brain and adrenal gland with moderate expression in liver, lung, spleen, prostate and spinal cord. Low expression in heart, uterus and prostate. Undetectable in blood cells. In the brain, strongly expressed in cortical regions, substantia nigra, caudate nucleus, hippocampus, medulla oblongata and pons. In brains affected by Alzheimer disease, expression in the inferior temporal lobe is substantially lower than in the frontal cortex.

It is found in the endoplasmic reticulum membrane. The protein localises to the golgi apparatus membrane. The catalysed reaction is cholesterol + NADP(+) = desmosterol + NADPH + H(+). It catalyses the reaction lanosterol + NADPH + H(+) = 24,25-dihydrolanosterol + NADP(+). The enzyme catalyses 5alpha-cholest-8-en-3beta-ol + NADP(+) = zymosterol + NADPH + H(+). It functions in the pathway steroid biosynthesis; cholesterol biosynthesis. Catalyzes the reduction of the delta-24 double bond of sterol intermediates during cholesterol biosynthesis. In addition to its cholesterol-synthesizing activity, can protect cells from oxidative stress by reducing caspase 3 activity during apoptosis induced by oxidative stress. Also protects against amyloid-beta peptide-induced apoptosis. The chain is Delta(24)-sterol reductase (DHCR24) from Homo sapiens (Human).